A 754-amino-acid polypeptide reads, in one-letter code: NAD(P)H-quinone oxidoreductase subunit 5, chloroplastic (754 aa).

16 helical membrane passes run 8-28, 40-60, 89-109, 125-145, 147-167, 185-205, 219-239, 258-278, 280-300, 327-347, 354-374, 396-416, 425-445, 552-572, 608-628, and 733-753; these read FWII…GLLL, WVFP…YLAI, VDPL…LVLI, FAYM…SNLI, IYFF…FWFT, GDFG…SLEF, NEVN…GAIA, TPIS…FLGA, LLPL…LGII, LGYM…FHLI, ALLF…VGYS, TSFL…CFWS, WLYS…TAFY, FSML…IPFF, FITN…IASF, and LVYI…VLFF.

This sequence belongs to the complex I subunit 5 family. NDH is composed of at least 16 different subunits, 5 of which are encoded in the nucleus.

Its subcellular location is the plastid. The protein localises to the chloroplast thylakoid membrane. The catalysed reaction is a plastoquinone + NADH + (n+1) H(+)(in) = a plastoquinol + NAD(+) + n H(+)(out). The enzyme catalyses a plastoquinone + NADPH + (n+1) H(+)(in) = a plastoquinol + NADP(+) + n H(+)(out). In terms of biological role, NDH shuttles electrons from NAD(P)H:plastoquinone, via FMN and iron-sulfur (Fe-S) centers, to quinones in the photosynthetic chain and possibly in a chloroplast respiratory chain. The immediate electron acceptor for the enzyme in this species is believed to be plastoquinone. Couples the redox reaction to proton translocation, and thus conserves the redox energy in a proton gradient. The chain is NAD(P)H-quinone oxidoreductase subunit 5, chloroplastic (ndhF) from Morus indica (Mulberry).